The following is a 172-amino-acid chain: S-ribosylhomocysteine lyase (172 aa).

Positions 54, 58, and 128 each coordinate Fe cation.

The protein belongs to the LuxS family. Homodimer. The cofactor is Fe cation.

It catalyses the reaction S-(5-deoxy-D-ribos-5-yl)-L-homocysteine = (S)-4,5-dihydroxypentane-2,3-dione + L-homocysteine. Functionally, involved in the synthesis of autoinducer 2 (AI-2) which is secreted by bacteria and is used to communicate both the cell density and the metabolic potential of the environment. The regulation of gene expression in response to changes in cell density is called quorum sensing. Catalyzes the transformation of S-ribosylhomocysteine (RHC) to homocysteine (HC) and 4,5-dihydroxy-2,3-pentadione (DPD). The chain is S-ribosylhomocysteine lyase from Aliivibrio fischeri (strain MJ11) (Vibrio fischeri).